The chain runs to 896 residues: Zinc finger protein 574 (896 aa).

3 C2H2-type zinc fingers span residues 16–38 (YVCSECNQLYGSLEEVLMHQNSH), 76–98 (YQCLECGQLLMSPSQLLEHQELH), and 126–148 (YECVDCKALFASQELWLNHRQTH). S164 carries the post-translational modification Phosphoserine. The C2H2-type 4 zinc finger occupies 214–236 (YKCSECSQLFQLPADFLEHQATH). Residues 259 to 272 (VEVPVSQPEPVPSS) show a composition bias toward low complexity. The disordered stretch occupies residues 259–303 (VEVPVSQPEPVPSSDHSYELRNGEALGRDRRGRRARRNNSGEPGG). Basic and acidic residues predominate over residues 274 to 287 (HSYELRNGEALGRD). S298 is subject to Phosphoserine. 4 consecutive C2H2-type zinc fingers follow at residues 309–331 (LFCSACDQLFLSPHQLQQHLRSH), 336–358 (FKCPLCSRVFPSPSSLDQHLGDH), 364–386 (FLCVDCGLAFGTEALLLAHRRAH), and 392–413 (HSCPCGKTFVNLTKFLYHRRTH). The segment at 434–460 (FPEPAPAETGEPEAPEPPVAEESSAEP) is disordered. C2H2-type zinc fingers lie at residues 466 to 489 (YRCLLCSREFGKALQLTRHQRFVH), 495 to 517 (HKCSICGKMFKKKSHVRNHLRTH), 523 to 545 (FPCPDCSKPFNSPANLARHRLTH), 551 to 573 (YRCGDCGKAFTQSSTLRQHRLVH), 579 to 601 (YRCQECGVRFHRPYRLLMHRYHH), and 607 to 630 (YKCRECPRSFLLRRLLEVHQLVAH). The C2H2-type 15; degenerate zinc finger occupies 636–659 (HRCSSCGAAFPSSLRLREHRCAAA). The segment at 667 to 689 (FECGTCGKKVGSAARLQAHEAAH) adopts a C2H2-type 16 zinc-finger fold. The segment at 687-733 (AAHAAAGPGEVLAKEPPAPRAPRAARTPITSPTTLGSAAPAAPAAPA) is disordered. The segment covering 707-732 (APRAARTPITSPTTLGSAAPAAPAAP) has biased composition (low complexity). The residue at position 717 (S717) is a Phosphoserine. 4 C2H2-type zinc fingers span residues 738 to 760 (LECSECKKLFSTETSLQVHRRIH), 766 to 788 (YPCPDCGKAFRQSTHLKDHRRLH), 794 to 816 (FACEVCGKAFAISMRLAEHRRIH), and 822 to 844 (YSCPDCGKSYRSFSNLWKHRKTH). R832 bears the Asymmetric dimethylarginine mark.

This sequence belongs to the krueppel C2H2-type zinc-finger protein family.

It is found in the nucleus. Its function is as follows. May be involved in transcriptional regulation. The sequence is that of Zinc finger protein 574 (ZNF574) from Bos taurus (Bovine).